We begin with the raw amino-acid sequence, 462 residues long: Toxin CfTX-2 (462 aa).

An N-terminal signal peptide occupies residues 1–17 (MILVSLLPLLFMTGIAS).

The protein belongs to the jellyfish toxin family. Type I subfamily. Oligomer. In terms of processing, contains disulfide bonds. Nematocytes.

Its subcellular location is the secreted. The protein localises to the nematocyst. It is found in the target cell membrane. Its function is as follows. May cause profound effects on the cardiovascular system of anesthetized rats (at 25 ug/kg), since the fraction containing this toxin and CfTX-1 produces an initial increase in mean arterial pressure, followed by cardiovascular collapse in all animals within 1 minute of injection. To note, the same fraction does not induce significant change in heart rate. Has weak hemolytic activity. Is lethal to crayfish. Causes cutaneous inflammation in humans. May act as a pore-forming toxin, disrupting normal transmembrane ion concentration gradients in susceptible cells. The protein is Toxin CfTX-2 of Chironex fleckeri (Australian box jellyfish).